Here is a 130-residue protein sequence, read N- to C-terminus: MVQRLTLRRRLSYNTKSNKRRVVRTPGGRLVYLYVKKQRTVPKCGQCKEKLSGIKPSRPSERPRMCRRLKTVTRTFGGVLCHRCLRERIIRAFLIDEQKVVKVLKAQQLGKPVSKPPKIQKTAKAASKSK.

The segment at 111 to 130 (KPVSKPPKIQKTAKAASKSK) is disordered.

This sequence belongs to the eukaryotic ribosomal protein eL34 family.

The sequence is that of Large ribosomal subunit protein eL34 (RpL34) from Aedes albopictus (Asian tiger mosquito).